The following is a 1007-amino-acid chain: Kinesin-like protein KIN-14F (1007 aa).

In terms of domain architecture, Calponin-homology (CH) spans alanine 41–aspartate 187. Residues serine 390–valine 715 enclose the Kinesin motor domain. ATP is bound at residue glycine 472–threonine 479. A coiled-coil region spans residues glycine 718–serine 748. Residues lysine 885 to arginine 904 show a composition bias toward basic and acidic residues. Disordered stretches follow at residues lysine 885 to aspartate 924 and serine 944 to lysine 1007. Residues threonine 963 to glycine 1001 show a composition bias toward polar residues.

The protein belongs to the TRAFAC class myosin-kinesin ATPase superfamily. Kinesin family. KIN-14 subfamily.

This Oryza sativa subsp. japonica (Rice) protein is Kinesin-like protein KIN-14F.